Consider the following 475-residue polypeptide: Lactate utilization protein B (475 aa).

4Fe-4S ferredoxin-type domains follow at residues 304–334 and 353–382; these read GTEF…GHSY and YEDH…LHEL. Cys313, Cys316, Cys319, Cys323, Cys366, Cys369, and Cys373 together coordinate [4Fe-4S] cluster.

Belongs to the LutB/YkgF family.

Its function is as follows. Is involved in L-lactate degradation and allows cells to grow with lactate as the sole carbon source. Has probably a role as an electron transporter during oxidation of L-lactate. This chain is Lactate utilization protein B, found in Shouchella clausii (strain KSM-K16) (Alkalihalobacillus clausii).